The chain runs to 936 residues: Protein translocase subunit SecA (936 aa).

Residues Gln-87, 105-109 (GEGKT), and Asp-515 each bind ATP. Residues Cys-920, Cys-922, Cys-931, and His-932 each coordinate Zn(2+).

This sequence belongs to the SecA family. In terms of assembly, monomer and homodimer. Part of the essential Sec protein translocation apparatus which comprises SecA, SecYEG and auxiliary proteins SecDF-YajC and YidC. Requires Zn(2+) as cofactor.

It localises to the cell inner membrane. The protein resides in the cytoplasm. The enzyme catalyses ATP + H2O + cellular proteinSide 1 = ADP + phosphate + cellular proteinSide 2.. Its function is as follows. Part of the Sec protein translocase complex. Interacts with the SecYEG preprotein conducting channel. Has a central role in coupling the hydrolysis of ATP to the transfer of proteins into and across the cell membrane, serving both as a receptor for the preprotein-SecB complex and as an ATP-driven molecular motor driving the stepwise translocation of polypeptide chains across the membrane. The polypeptide is Protein translocase subunit SecA (Paraburkholderia xenovorans (strain LB400)).